The chain runs to 171 residues: 3-hydroxydecanoyl-[acyl-carrier-protein] dehydratase (171 aa).

Histidine 70 is a catalytic residue.

The protein belongs to the thioester dehydratase family. FabA subfamily. As to quaternary structure, homodimer.

It localises to the cytoplasm. The enzyme catalyses a (3R)-hydroxyacyl-[ACP] = a (2E)-enoyl-[ACP] + H2O. It carries out the reaction (3R)-hydroxydecanoyl-[ACP] = (2E)-decenoyl-[ACP] + H2O. It catalyses the reaction (2E)-decenoyl-[ACP] = (3Z)-decenoyl-[ACP]. The protein operates within lipid metabolism; fatty acid biosynthesis. In terms of biological role, necessary for the introduction of cis unsaturation into fatty acids. Catalyzes the dehydration of (3R)-3-hydroxydecanoyl-ACP to E-(2)-decenoyl-ACP and then its isomerization to Z-(3)-decenoyl-ACP. Can catalyze the dehydratase reaction for beta-hydroxyacyl-ACPs with saturated chain lengths up to 16:0, being most active on intermediate chain length. The protein is 3-hydroxydecanoyl-[acyl-carrier-protein] dehydratase of Shewanella halifaxensis (strain HAW-EB4).